We begin with the raw amino-acid sequence, 446 residues long: Ribosomal protein uS12 methylthiotransferase RimO (446 aa).

Positions 7–118 (PKIAFAHLGC…IVEVIERVER (112 aa)) constitute an MTTase N-terminal domain. 6 residues coordinate [4Fe-4S] cluster: Cys-16, Cys-52, Cys-81, Cys-156, Cys-160, and Cys-163. A Radical SAM core domain is found at 142–371 (TTPAPVAYLR…MELQQPIAQR (230 aa)). The 67-residue stretch at 374–440 (AAEVGKIVPV…IYDLYGIIPA (67 aa)) folds into the TRAM domain.

The protein belongs to the methylthiotransferase family. RimO subfamily. It depends on [4Fe-4S] cluster as a cofactor.

The protein localises to the cytoplasm. It catalyses the reaction L-aspartate(89)-[ribosomal protein uS12]-hydrogen + (sulfur carrier)-SH + AH2 + 2 S-adenosyl-L-methionine = 3-methylsulfanyl-L-aspartate(89)-[ribosomal protein uS12]-hydrogen + (sulfur carrier)-H + 5'-deoxyadenosine + L-methionine + A + S-adenosyl-L-homocysteine + 2 H(+). Functionally, catalyzes the methylthiolation of an aspartic acid residue of ribosomal protein uS12. The chain is Ribosomal protein uS12 methylthiotransferase RimO from Thermosynechococcus vestitus (strain NIES-2133 / IAM M-273 / BP-1).